Consider the following 425-residue polypeptide: Glutamate-1-semialdehyde 2,1-aminomutase (425 aa).

The residue at position 264 (Lys264) is an N6-(pyridoxal phosphate)lysine.

This sequence belongs to the class-III pyridoxal-phosphate-dependent aminotransferase family. HemL subfamily. As to quaternary structure, homodimer. It depends on pyridoxal 5'-phosphate as a cofactor.

It localises to the cytoplasm. It carries out the reaction (S)-4-amino-5-oxopentanoate = 5-aminolevulinate. Its pathway is porphyrin-containing compound metabolism; protoporphyrin-IX biosynthesis; 5-aminolevulinate from L-glutamyl-tRNA(Glu): step 2/2. The protein is Glutamate-1-semialdehyde 2,1-aminomutase of Campylobacter lari (strain RM2100 / D67 / ATCC BAA-1060).